We begin with the raw amino-acid sequence, 255 residues long: Large ribosomal subunit protein uL4 (255 aa).

The protein belongs to the universal ribosomal protein uL4 family. As to quaternary structure, part of the 50S ribosomal subunit.

One of the primary rRNA binding proteins, this protein initially binds near the 5'-end of the 23S rRNA. It is important during the early stages of 50S assembly. It makes multiple contacts with different domains of the 23S rRNA in the assembled 50S subunit and ribosome. Its function is as follows. Forms part of the polypeptide exit tunnel. The sequence is that of Large ribosomal subunit protein uL4 from Thermoplasma acidophilum (strain ATCC 25905 / DSM 1728 / JCM 9062 / NBRC 15155 / AMRC-C165).